We begin with the raw amino-acid sequence, 161 residues long: Ribosome maturation factor RimP (161 aa).

The protein belongs to the RimP family.

The protein localises to the cytoplasm. In terms of biological role, required for maturation of 30S ribosomal subunits. The polypeptide is Ribosome maturation factor RimP (Rickettsia typhi (strain ATCC VR-144 / Wilmington)).